Reading from the N-terminus, the 459-residue chain is U1 small nuclear ribonucleoprotein 70 kDa (459 aa).

In terms of domain architecture, RRM spans 99-178 (KTIFVSRISY…RRIVVDIERG (80 aa)). A disordered region spans residues 185–459 (KPRKFGGGLG…YSMISNENGF (275 aa)). A compositionally biased stretch (basic and acidic residues) spans 211 to 241 (EMSESREKEKEREKEKEKEKERMEKMKKRDG). A compositionally biased stretch (low complexity) spans 242–254 (GLSSNGNRSNGIS). Basic and acidic residues predominate over residues 263–408 (DRGDRGDRDR…IDERRRDQRD (146 aa)). The span at 426-440 (QHHHHQQNHQSHHNQ) shows a compositional bias: basic residues.

The protein resides in the nucleus. Functionally, mediates the splicing of pre-mRNA by binding to the stem loop I region of U1-snRNA. This Dictyostelium discoideum (Social amoeba) protein is U1 small nuclear ribonucleoprotein 70 kDa (snrnp70).